A 157-amino-acid chain; its full sequence is Succinate dehydrogenase assembly factor 2-B, mitochondrial (157 aa).

A mitochondrion-targeting transit peptide spans 1–22 (MLSQWFRGRHLVVRSALFSRRR).

The protein belongs to the SDHAF2 family. As to quaternary structure, interacts with the flavoprotein subunit within the SDH catalytic dimer.

The protein resides in the mitochondrion matrix. Functionally, plays an essential role in the assembly of succinate dehydrogenase (SDH), an enzyme complex (also referred to as respiratory complex II) that is a component of both the tricarboxylic acid (TCA) cycle and the mitochondrial electron transport chain, and which couples the oxidation of succinate to fumarate with the reduction of ubiquinone (coenzyme Q) to ubiquinol. Required for flavinylation (covalent attachment of FAD) of the flavoprotein subunit of the SDH catalytic dimer. The protein is Succinate dehydrogenase assembly factor 2-B, mitochondrial of Drosophila mojavensis (Fruit fly).